Here is a 119-residue protein sequence, read N- to C-terminus: UPF0231 protein YPTB0717 (119 aa).

Belongs to the UPF0231 family.

The sequence is that of UPF0231 protein YPTB0717 from Yersinia pseudotuberculosis serotype I (strain IP32953).